Consider the following 1461-residue polypeptide: A disintegrin and metalloproteinase with thrombospondin motifs adt-1 (1461 aa).

The first 21 residues, 1–21 (MPPFYIVITFLLSTVFRISQS), serve as a signal peptide directing secretion. A propeptide spanning residues 22 to 163 (VHHHLNEEEL…HLQKERHLVY (142 aa)) is cleaved from the precursor. The N-linked (GlcNAc...) asparagine glycan is linked to asparagine 69. The Cysteine switch motif lies at 190–197 (SFCDTSEQ). Residue asparagine 212 is glycosylated (N-linked (GlcNAc...) asparagine). The region spanning 233–435 (ITLEIGLFLD…CSVREFNAFL (203 aa)) is the Peptidase M12B domain. A Zn(2+)-binding site is contributed by histidine 388. Glutamate 389 is an active-site residue. Positions 392 and 398 each coordinate Zn(2+). Cysteine 405 and cysteine 410 are oxidised to a cystine. One can recognise a Disintegrin domain in the interval 464 to 546 (RLPGQRFTAD…TFGLTPVPID (83 aa)). TSP type-1 domains are found at residues 708–759 (HQWE…RDCE), 761–802 (FGEW…RPCD), 804–852 (EGCW…QKCI), 853–898 (SQSW…QQCP), 903–952 (LSVW…GPCE), 955–1000 (YLTW…IACL), 1035–1083 (SIHS…NSCL), 1087–1133 (IWSD…PSCS), 1148–1200 (APRW…GSCS), 1203–1260 (AGGW…NVCS), 1265–1321 (DGGW…ARCH), 1324–1378 (DGGW…PACD), and 1382–1435 (DGEW…RQSP). Disulfide bonds link cysteine 719-cysteine 751, cysteine 723-cysteine 758, and cysteine 735-cysteine 741. 6 cysteine pairs are disulfide-bonded: cysteine 816/cysteine 846, cysteine 820/cysteine 851, cysteine 831/cysteine 836, cysteine 862/cysteine 892, cysteine 866/cysteine 897, and cysteine 877/cysteine 882. 3 disulfides stabilise this stretch: cysteine 1047-cysteine 1077, cysteine 1051-cysteine 1082, and cysteine 1062-cysteine 1067. 12 cysteine pairs are disulfide-bonded: cysteine 1160/cysteine 1194, cysteine 1162/cysteine 1199, cysteine 1173/cysteine 1184, cysteine 1215/cysteine 1253, cysteine 1219/cysteine 1259, cysteine 1231/cysteine 1243, cysteine 1277/cysteine 1314, cysteine 1281/cysteine 1320, cysteine 1292/cysteine 1304, cysteine 1336/cysteine 1372, cysteine 1340/cysteine 1377, and cysteine 1351/cysteine 1362.

Zn(2+) is required as a cofactor. In hermaphrodites, expressed in the vulva, head ganglia, ventral nerve cord and amphid neurons. Expressed in the rays of the male tail.

The protein localises to the secreted. Its function is as follows. Plays a role in ray morphogenesis in the male tail, probably by remodeling the extracellular matrix (ECM) in the cuticle. The sequence is that of A disintegrin and metalloproteinase with thrombospondin motifs adt-1 from Caenorhabditis elegans.